Reading from the N-terminus, the 1068-residue chain is Protein AF-10 (1068 aa).

The PHD-type 1 zinc finger occupies 22 to 74; sequence IGGCCVCSDERGWAENPLVYCDGHGCSVAVHQACYGIVQVPTGPWFCRKCESQ. The C2HC pre-PHD-type zinc-finger motif lies at 79–112; it reads RVRCELCPHKDGALKRTDNGGWAHVVCALYIPEV. Residues 106–190 form a required for interaction with histone H3 region; that stretch reads ALYIPEVQFA…EGNGADNVQY (85 aa). The segment at 135-198 adopts a PHD-type 2 zinc-finger fold; that stretch reads KTCYICDEQG…QYCGYCKYHF (64 aa). The segment at 207 to 260 is disordered; it reads GSNRSYEQSLSDSSSHSQDKHHEKEKKKYKEKDKHKQKHKKQPEPSPALVPSLT. A Phosphoserine modification is found at Ser217. Over residues 223-240 the composition is skewed to basic and acidic residues; that stretch reads SQDKHHEKEKKKYKEKDK. Ser252 is modified (phosphoserine). A Glycyl lysine isopeptide (Lys-Gly) (interchain with G-Cter in SUMO2) cross-link involves residue Lys280. The span at 296–305 shows a compositional bias: polar residues; it reads EVSAHTSSGK. Disordered regions lie at residues 296-416 and 428-506; these read EVSA…SFSS and SQPK…SVAS. Basic and acidic residues predominate over residues 306–317; sequence DVSEARGSEGKG. The segment covering 340 to 351 has biased composition (polar residues); that stretch reads TAVSASSPFPQG. Residues 352–372 are compositionally biased toward low complexity; the sequence is SFSGTPGSVKSSSGSSVQSPQ. Composition is skewed to polar residues over residues 387-396, 404-416, and 428-446; these read YTHTQQPSST, SGSQEAAVNSFSS, and SQPKSFDNSPGELGSSSLP. A Phosphoserine modification is found at Ser436. The segment covering 465–483 has biased composition (basic residues); it reads EKKRKGNKQSKHGPGRPKG. Positions 490 to 506 are enriched in low complexity; sequence VSHLSVSSASPTSSVAS. Ser532 is subject to Phosphoserine. A compositionally biased stretch (low complexity) spans 583 to 594; that stretch reads SGSGSSTPVSSS. Disordered regions lie at residues 583–613 and 660–698; these read SGSGSSTPVSSSHIPQQSSGHLQQVGALSPS and SESSQTDQDLGDNARSLGGRGSSPRGSLSPRSPVSNLQL. Residues 595–604 show a composition bias toward polar residues; it reads HIPQQSSGHL. Residues 681–692 are compositionally biased toward low complexity; sequence SSPRGSLSPRSP. A phosphoserine mark is found at Ser686, Ser688, and Ser691. Residues 752–780 are leucine-zipper; it reads LQVENRRLEEQIKNLTAKKERLQLLNAQL. Disordered regions lie at residues 786–869 and 1040–1068; these read AITT…VSGV and PFLTIHGDSTSQKVTRLSDKTGPVAQEKS. Residues 787 to 816 are compositionally biased toward polar residues; the sequence is ITTNPSPSHQMHTYTAQTAPPPDSLNSSKS. 2 stretches are compositionally biased toward low complexity: residues 836 to 850 and 857 to 869; these read LTSSGQSTSSSSALS and QSPAQQSSGVSGV. Residues 1040–1054 show a composition bias toward polar residues; the sequence is PFLTIHGDSTSQKVT.

As to quaternary structure, self-associates. Interacts with FSTL3; the interaction enhances MLLT10 in vitro transcriptional activity and self-association. Interacts with YEATS4. Interacts with SS18. Interacts with DOT1L. Interacts with histone H3; interaction is necessary for MLLT10 binding to nucleosomes; interaction is inhibited by histone H3 'Lys-27' methylations (H3K27me1, H3K27me2 and H3K27me3) amd acetylation; interaction stabilizes association of MLLT10 at chromatin; interaction is essential for histone H3 'Lys-79' dimethylation (H3K79me2).

The protein localises to the nucleus. In terms of biological role, probably involved in transcriptional regulation. Binds to cruciform DNA. In cells, binding to unmodified histone H3 regulates DOT1L functions including histone H3 'Lys-79' dimethylation (H3K79me2) and gene activation. This is Protein AF-10 from Mus musculus (Mouse).